The sequence spans 214 residues: Octanoyltransferase (214 aa).

One can recognise a BPL/LPL catalytic domain in the interval 29 to 214 (STTPDEIWIL…EHLQKQLMPT (186 aa)). Substrate-binding positions include 69–76 (RGGEITYH), 146–148 (ALG), and 159–161 (GLA). The active-site Acyl-thioester intermediate is the C177.

It belongs to the LipB family.

The protein resides in the cytoplasm. It carries out the reaction octanoyl-[ACP] + L-lysyl-[protein] = N(6)-octanoyl-L-lysyl-[protein] + holo-[ACP] + H(+). It participates in protein modification; protein lipoylation via endogenous pathway; protein N(6)-(lipoyl)lysine from octanoyl-[acyl-carrier-protein]: step 1/2. Catalyzes the transfer of endogenously produced octanoic acid from octanoyl-acyl-carrier-protein onto the lipoyl domains of lipoate-dependent enzymes. Lipoyl-ACP can also act as a substrate although octanoyl-ACP is likely to be the physiological substrate. This Polynucleobacter asymbioticus (strain DSM 18221 / CIP 109841 / QLW-P1DMWA-1) (Polynucleobacter necessarius subsp. asymbioticus) protein is Octanoyltransferase.